Consider the following 532-residue polypeptide: Cytochrome P450 monooxygenase pgmC (532 aa).

A helical membrane pass occupies residues 15 to 32 (ISTLAVLIGFIALLTAWL). Heme is bound at residue Cys438.

This sequence belongs to the cytochrome P450 family. Heme is required as a cofactor.

It localises to the membrane. Its pathway is pigment biosynthesis. It participates in secondary metabolite biosynthesis. In terms of biological role, cytochrome P450 monooxygenase; part of the gene cluster that mediates the biosynthesis of pleosporalin A, ascomycone A, as well as a third cryptic naphthoquinone derived pigment, all responsible for the coloration of conidia. Involved in the oxidation of fusarubinaldehyde at C-9. PgmC has low substrate-specificity and is also able to use the pgmA product 3-acetonyl-1,6,8-trihydroxy-2-naphthaldehyde as a substrate. The pathway begins with the biosynthesis of the cyclized heptaketide 3-acetonyl-1,6,8-trihydroxy-2-naphthaldehyde by the NR-PKS pgmA. The C-6 hydroxyl group is further methylated by the O-methyltransferase pgmB to yield fusarubinaldehyde which is in turn oxidized by the cytochrome P450 monooxygenase pgmC at C-9. The C-1 hydroxyl group is then methylated spontaneously. Although pgmE, pgmD and pgmH are essential for the production of pleosporalin A, it is not the case for the 2 other final products and it remains difficult to assign a specific function to each enzyme. PgmF and pgmG seem not to be involved in pigment biosynthesis although they were regulated by the cluster-specific transcription factor pgmR. In Aspergillus terreus (strain NIH 2624 / FGSC A1156), this protein is Cytochrome P450 monooxygenase pgmC.